Consider the following 148-residue polypeptide: Ribonuclease H (148 aa).

The RNase H type-1 domain maps to 1-142 (MSDSVEIYTD…ADQLANRGVD (142 aa)). Mg(2+) is bound by residues aspartate 10, glutamate 48, aspartate 70, and aspartate 134. Residues 129 to 148 (GNERADQLANRGVDEVRAQR) form a disordered region.

This sequence belongs to the RNase H family. As to quaternary structure, monomer. Requires Mg(2+) as cofactor.

The protein resides in the cytoplasm. The catalysed reaction is Endonucleolytic cleavage to 5'-phosphomonoester.. Endonuclease that specifically degrades the RNA of RNA-DNA hybrids. In Pseudomonas entomophila (strain L48), this protein is Ribonuclease H.